The primary structure comprises 342 residues: Probable dual-specificity RNA methyltransferase RlmN (342 aa).

Glutamate 91 functions as the Proton acceptor in the catalytic mechanism. The Radical SAM core domain maps to 97–327; that stretch reads YKHGNSICVS…TTIRREMGAD (231 aa). Cysteine 104 and cysteine 332 are disulfide-bonded. Residues cysteine 111, cysteine 115, and cysteine 118 each contribute to the [4Fe-4S] cluster site. Residues 158–159, serine 190, 213–215, and asparagine 289 each bind S-adenosyl-L-methionine; these read GE and SLH. The active-site S-methylcysteine intermediate is the cysteine 332.

It belongs to the radical SAM superfamily. RlmN family. [4Fe-4S] cluster serves as cofactor.

It is found in the cytoplasm. It catalyses the reaction adenosine(2503) in 23S rRNA + 2 reduced [2Fe-2S]-[ferredoxin] + 2 S-adenosyl-L-methionine = 2-methyladenosine(2503) in 23S rRNA + 5'-deoxyadenosine + L-methionine + 2 oxidized [2Fe-2S]-[ferredoxin] + S-adenosyl-L-homocysteine. It carries out the reaction adenosine(37) in tRNA + 2 reduced [2Fe-2S]-[ferredoxin] + 2 S-adenosyl-L-methionine = 2-methyladenosine(37) in tRNA + 5'-deoxyadenosine + L-methionine + 2 oxidized [2Fe-2S]-[ferredoxin] + S-adenosyl-L-homocysteine. Functionally, specifically methylates position 2 of adenine 2503 in 23S rRNA and position 2 of adenine 37 in tRNAs. In Clostridium botulinum (strain Okra / Type B1), this protein is Probable dual-specificity RNA methyltransferase RlmN.